The sequence spans 748 residues: Catalase-peroxidase (748 aa).

Positions 92 to 238 form a cross-link, tryptophyl-tyrosyl-methioninium (Trp-Tyr) (with M-264); sequence WHSAGTYRTG…LAAVQMGLIY (147 aa). H93 acts as the Proton acceptor in catalysis. Residues 238-264 constitute a cross-link (tryptophyl-tyrosyl-methioninium (Tyr-Met) (with W-92)); that stretch reads YVNPEGPDGNPDPLLAAKDIRDTFGRM. H279 is a binding site for heme b.

It belongs to the peroxidase family. Peroxidase/catalase subfamily. In terms of assembly, homodimer or homotetramer. The cofactor is heme b. Post-translationally, formation of the three residue Trp-Tyr-Met cross-link is important for the catalase, but not the peroxidase activity of the enzyme.

The enzyme catalyses H2O2 + AH2 = A + 2 H2O. It carries out the reaction 2 H2O2 = O2 + 2 H2O. Functionally, bifunctional enzyme with both catalase and broad-spectrum peroxidase activity. This is Catalase-peroxidase from Xanthomonas campestris pv. campestris (strain 8004).